The following is a 91-amino-acid chain: Putative antitoxin YutD (91 aa).

A disulfide bridge connects residues C77 and C81.

Homodimer, probably forms a complex with cognate toxin YutE.

Probable antitoxin component of a putative type VII toxin-antitoxin (TA) system. Probably neutralizes cognate toxin YutE. This chain is Putative antitoxin YutD (yutD), found in Bacillus subtilis (strain 168).